A 295-amino-acid polypeptide reads, in one-letter code: 5'-adenylylsulfate reductase-like 6 (295 aa).

A signal peptide spans 1 to 22 (MEKKLTLLLLVVVVLFVNLTNA). The region spanning 23–161 (TVRVQICPRE…LVAFYTDVTG (139 aa)) is the Thioredoxin domain. Asparagine 136 is a glycosylation site (N-linked (GlcNAc...) asparagine). A helical membrane pass occupies residues 208 to 228 (ATVFVLLRLLHLISPTMVVFV).

It is found in the membrane. This Arabidopsis thaliana (Mouse-ear cress) protein is 5'-adenylylsulfate reductase-like 6 (APRL6).